A 542-amino-acid polypeptide reads, in one-letter code: Prolyl 3-hydroxylase OGFOD1 (542 aa).

A Fe2OG dioxygenase domain is found at 134-239 (DLESTIDMSC…RLSISGWFHG (106 aa)). The Fe cation site is built by histidine 155 and aspartate 157. Tyrosine 169 serves as a coordination point for 2-oxoglutarate. Histidine 218 lines the Fe cation pocket. Arginine 230 lines the 2-oxoglutarate pocket. A disordered region spans residues 371–435 (SEDEPEDKKE…AKKESSVPTC (65 aa)). The span at 395–417 (SHSSSEPENSWAATSDSSLQSEG) shows a compositional bias: polar residues.

Belongs to the TPA1 family. In terms of assembly, monomer. Fe(2+) serves as cofactor. The cofactor is L-ascorbate.

It localises to the cytoplasm. Its subcellular location is the nucleus. It carries out the reaction [ribosomal protein uS12]-L-proline + 2-oxoglutarate + O2 = [ribosomal protein uS12]-(3S)-3-hydroxy-L-proline + succinate + CO2. Functionally, prolyl 3-hydroxylase that catalyzes 3-hydroxylation of 'Pro-62' of small ribosomal subunit uS12 (RPS23), thereby regulating protein translation termination efficiency. Involved in stress granule formation. In Bos taurus (Bovine), this protein is Prolyl 3-hydroxylase OGFOD1 (OGFOD1).